The sequence spans 109 residues: Peptide chaperone MftB (109 aa).

Belongs to the peptide chaperone MftB family. As to quaternary structure, interacts with MftA and MftC.

Peptide chaperone involved in the biosynthesis of the enzyme cofactor mycofactocin (MFT). Binds MftA and MftC with high affinity, and is essential for MftC activity on MftA, likely via the formation of a ternary complex. The polypeptide is Peptide chaperone MftB (Mycobacterium ulcerans (strain Agy99)).